Here is a 277-residue protein sequence, read N- to C-terminus: Secoisolariciresinol dehydrogenase (277 aa).

NAD(+) is bound by residues 24–29 (GGASGI), D48, V73, and N99. A substrate-binding site is contributed by S163. Y166 functions as the Proton donor/acceptor in the catalytic mechanism. An NAD(+)-binding site is contributed by K170.

The protein belongs to the short-chain dehydrogenases/reductases (SDR) family. In terms of assembly, homotetramer.

The catalysed reaction is (-)-secoisolariciresinol + 2 NAD(+) = (-)-matairesinol + 2 NADH + 2 H(+). Its function is as follows. Oxidoreductase involved in lignan biosynthesis. Catalyzes the stereospecific conversion of (-)-secoisolariciresinol to (-)-matairesinol via a lactol intermediate. The polypeptide is Secoisolariciresinol dehydrogenase (Forsythia intermedia (Border forsythia)).